The following is a 445-amino-acid chain: MSRDPTGVGARWAIMIVSLGVTASSFLFINGVAFLIPRLENARGTPLSHAGLLASMPSWGLVVTMFAWGYLLDHVGERMVMAVGSALTAAAAYAAASVHSLLWIGVFLFLGGMAAGGCNSAGGRLVSGWFPPQQRGLAMGIRQTAQPLGIASGALVIPELAERGVHAGLMFPAVVCTLAAVASVLGIVDPPRKSRTKASEQELASPYRGSSILWRIHAASALLMMPQTVTVTFMLVWLINHHGWSVAQAGVLVTISQLLGALGRVAVGRWSDHVGSRMRPVRLIAAAAAATLFLLAAVDNEGSRYDVLLMIAISVIAVLDNGLEATAITEYAGPYWSGRALGIQNTTQRLMAAAGPPLFGSLITTAAYPTAWALCGVFPLAAVPLVPVRLLPPGLETRARRQSVRRHRWWQAVRCHAWPNGPRRPGPPGQPRRVRQGGTAITPPT.

Helical transmembrane passes span 16 to 36 (IVSL…AFLI), 52 to 72 (LLAS…GYLL), 98 to 118 (VHSL…AGGC), 168 to 188 (GLMF…LGIV), 219 to 239 (ASAL…VWLI), 243 to 263 (GWSV…GALG), 283 to 303 (LIAA…NEGS), and 366 to 386 (AAYP…VPLV). Positions 417-445 (AWPNGPRRPGPPGQPRRVRQGGTAITPPT) are disordered.

This sequence belongs to the major facilitator superfamily.

The protein localises to the cell membrane. This is an uncharacterized protein from Mycobacterium tuberculosis (strain ATCC 25618 / H37Rv).